A 502-amino-acid chain; its full sequence is Thermosome subunit beta (502 aa).

This sequence belongs to the TCP-1 chaperonin family. Forms a Heterooligomeric complex of two stacked eight-membered rings.

Its function is as follows. Molecular chaperone; binds unfolded polypeptides in vitro, and has a weak ATPase activity. This is Thermosome subunit beta (thsB) from Desulfurococcus mucosus (Desulfurococcus mobilis).